A 228-amino-acid polypeptide reads, in one-letter code: Phosphoribosylformylglycinamidine synthase subunit PurQ (228 aa).

A Glutamine amidotransferase type-1 domain is found at 2–225; it reads KAAVISFPGS…INQTEGADVR (224 aa). The Nucleophile role is filled by Cys-86. Active-site residues include His-194 and Glu-196.

As to quaternary structure, part of the FGAM synthase complex composed of 1 PurL, 1 PurQ and 2 PurS subunits.

The protein localises to the cytoplasm. It carries out the reaction N(2)-formyl-N(1)-(5-phospho-beta-D-ribosyl)glycinamide + L-glutamine + ATP + H2O = 2-formamido-N(1)-(5-O-phospho-beta-D-ribosyl)acetamidine + L-glutamate + ADP + phosphate + H(+). The catalysed reaction is L-glutamine + H2O = L-glutamate + NH4(+). The protein operates within purine metabolism; IMP biosynthesis via de novo pathway; 5-amino-1-(5-phospho-D-ribosyl)imidazole from N(2)-formyl-N(1)-(5-phospho-D-ribosyl)glycinamide: step 1/2. Part of the phosphoribosylformylglycinamidine synthase complex involved in the purines biosynthetic pathway. Catalyzes the ATP-dependent conversion of formylglycinamide ribonucleotide (FGAR) and glutamine to yield formylglycinamidine ribonucleotide (FGAM) and glutamate. The FGAM synthase complex is composed of three subunits. PurQ produces an ammonia molecule by converting glutamine to glutamate. PurL transfers the ammonia molecule to FGAR to form FGAM in an ATP-dependent manner. PurS interacts with PurQ and PurL and is thought to assist in the transfer of the ammonia molecule from PurQ to PurL. The chain is Phosphoribosylformylglycinamidine synthase subunit PurQ from Lacticaseibacillus paracasei (strain ATCC 334 / BCRC 17002 / CCUG 31169 / CIP 107868 / KCTC 3260 / NRRL B-441) (Lactobacillus paracasei).